The chain runs to 402 residues: Xylose/arabinose-binding protein XylF (402 aa).

A helical membrane pass occupies residues 38-58 (GIIAGVLAAFGAGFGSGYVTA).

It belongs to the bacterial solute-binding protein 2 family. In terms of assembly, the complex is composed of two ATP-binding proteins (XylG), two transmembrane proteins (XylH) and a solute-binding protein (XylF).

It localises to the cell membrane. Part of the ABC transporter complex XylFGH involved in the uptake of xylose and arabinose. This chain is Xylose/arabinose-binding protein XylF, found in Sulfolobus acidocaldarius (strain ATCC 33909 / DSM 639 / JCM 8929 / NBRC 15157 / NCIMB 11770).